The chain runs to 134 residues: Large ribosomal subunit protein eL32 (134 aa).

Belongs to the eukaryotic ribosomal protein eL32 family.

This Drosophila affinis (Fruit fly) protein is Large ribosomal subunit protein eL32 (RpL32).